A 190-amino-acid chain; its full sequence is Histone H5 (190 aa).

Residues 1 to 29 form a disordered region; it reads MTESLVLSPAPAKPKRVKASRRSASHPTY. The span at 13-24 shows a compositional bias: basic residues; it reads KPKRVKASRRSA. 4 positions are modified to phosphoserine: S23, S30, S146, and S167. Positions 25-98 constitute an H15 domain; it reads SHPTYSEMIA…GASGSFRLAK (74 aa). The segment at 87 to 190 is disordered; it reads GVGASGSFRL…SGARKSPKKK (104 aa). A compositionally biased stretch (basic residues) spans 104-190; the sequence is RSPGKKKKAV…SGARKSPKKK (87 aa).

This sequence belongs to the histone H1/H5 family. In terms of tissue distribution, erythroid cells.

The protein localises to the nucleus. Its subcellular location is the chromosome. In terms of biological role, histone H5 performs the same function as H1, being necessary for the condensation of nucleosome chains into higher order structures, and replaces histone H1 in certain cells. The polypeptide is Histone H5 (Gallus gallus (Chicken)).